Here is a 205-residue protein sequence, read N- to C-terminus: Cytochrome c oxidase subunit 3 (205 aa).

5 helical membrane passes run 29–49, 72–92, 104–124, 142–162, and 184–204; these read TIVF…MYFV, ALLI…GVFA, WFLV…YEYI, FFIT…AFVV, and SYYW…IYFI.

As to quaternary structure, associates with subunits I, II and IV to form cytochrome c oxidase. The 4 subunit cytochrome c oxidase forms a supercomplex with the menaquinol-cytochrome c reductase complex (cytochrome bc1).

Its subcellular location is the cell membrane. The enzyme catalyses 4 Fe(II)-[cytochrome c] + O2 + 8 H(+)(in) = 4 Fe(III)-[cytochrome c] + 2 H2O + 4 H(+)(out). The polypeptide is Cytochrome c oxidase subunit 3 (ctaE) (Corynebacterium glutamicum (strain ATCC 13032 / DSM 20300 / JCM 1318 / BCRC 11384 / CCUG 27702 / LMG 3730 / NBRC 12168 / NCIMB 10025 / NRRL B-2784 / 534)).